The following is a 609-amino-acid chain: Elongation factor 4 (609 aa).

A tr-type G domain is found at E11 to S193. GTP-binding positions include D23 to T28 and N140 to D143.

It belongs to the TRAFAC class translation factor GTPase superfamily. Classic translation factor GTPase family. LepA subfamily.

Its subcellular location is the cell membrane. The catalysed reaction is GTP + H2O = GDP + phosphate + H(+). In terms of biological role, required for accurate and efficient protein synthesis under certain stress conditions. May act as a fidelity factor of the translation reaction, by catalyzing a one-codon backward translocation of tRNAs on improperly translocated ribosomes. Back-translocation proceeds from a post-translocation (POST) complex to a pre-translocation (PRE) complex, thus giving elongation factor G a second chance to translocate the tRNAs correctly. Binds to ribosomes in a GTP-dependent manner. The protein is Elongation factor 4 of Geobacillus thermodenitrificans (strain NG80-2).